The sequence spans 221 residues: PKHD-type hydroxylase P9211_12561 (221 aa).

Positions 80-174 (KVHGTMFTRS…RIVCVGWIQS (95 aa)) constitute a Fe2OG dioxygenase domain. His-98, Asp-100, and His-155 together coordinate Fe cation. Arg-165 contacts 2-oxoglutarate.

Requires Fe(2+) as cofactor. It depends on L-ascorbate as a cofactor.

The protein is PKHD-type hydroxylase P9211_12561 of Prochlorococcus marinus (strain MIT 9211).